The following is a 348-amino-acid chain: Methylthioribose-1-phosphate isomerase (348 aa).

Substrate is bound by residues 47–49 (RGA), R90, and Q196. D237 functions as the Proton donor in the catalytic mechanism. 247–248 (NK) serves as a coordination point for substrate.

It belongs to the eIF-2B alpha/beta/delta subunits family. MtnA subfamily.

The catalysed reaction is 5-(methylsulfanyl)-alpha-D-ribose 1-phosphate = 5-(methylsulfanyl)-D-ribulose 1-phosphate. It participates in amino-acid biosynthesis; L-methionine biosynthesis via salvage pathway; L-methionine from S-methyl-5-thio-alpha-D-ribose 1-phosphate: step 1/6. Functionally, catalyzes the interconversion of methylthioribose-1-phosphate (MTR-1-P) into methylthioribulose-1-phosphate (MTRu-1-P). The sequence is that of Methylthioribose-1-phosphate isomerase from Synechococcus sp. (strain ATCC 27144 / PCC 6301 / SAUG 1402/1) (Anacystis nidulans).